A 95-amino-acid chain; its full sequence is Integration host factor subunit beta (95 aa).

It belongs to the bacterial histone-like protein family. In terms of assembly, heterodimer of an alpha and a beta chain.

Functionally, this protein is one of the two subunits of integration host factor, a specific DNA-binding protein that functions in genetic recombination as well as in transcriptional and translational control. In Klebsiella pneumoniae (strain 342), this protein is Integration host factor subunit beta.